The following is a 453-amino-acid chain: Bifunctional protein GlmU (453 aa).

The segment at 1–231 (MERTCLAVIL…EIEMTGCNNR (231 aa)) is pyrophosphorylase. UDP-N-acetyl-alpha-D-glucosamine contacts are provided by residues 10 to 13 (LAAG), K24, Q77, 82 to 83 (GT), 105 to 107 (YGD), G143, E157, N172, and N229. Mg(2+) is bound at residue D107. Residue N229 coordinates Mg(2+). The interval 232-252 (AELAVIERFWQERRRREMMLA) is linker. Residues 253-453 (GVTMIAPETV…AIKAAKRAKA (201 aa)) form an N-acetyltransferase region. UDP-N-acetyl-alpha-D-glucosamine is bound by residues R318 and K336. Catalysis depends on H348, which acts as the Proton acceptor. Positions 351 and 362 each coordinate UDP-N-acetyl-alpha-D-glucosamine. Acetyl-CoA is bound by residues A365, 371–372 (NY), S390, S408, and R425.

This sequence in the N-terminal section; belongs to the N-acetylglucosamine-1-phosphate uridyltransferase family. In the C-terminal section; belongs to the transferase hexapeptide repeat family. In terms of assembly, homotrimer. Requires Mg(2+) as cofactor.

Its subcellular location is the cytoplasm. It catalyses the reaction alpha-D-glucosamine 1-phosphate + acetyl-CoA = N-acetyl-alpha-D-glucosamine 1-phosphate + CoA + H(+). The enzyme catalyses N-acetyl-alpha-D-glucosamine 1-phosphate + UTP + H(+) = UDP-N-acetyl-alpha-D-glucosamine + diphosphate. The protein operates within nucleotide-sugar biosynthesis; UDP-N-acetyl-alpha-D-glucosamine biosynthesis; N-acetyl-alpha-D-glucosamine 1-phosphate from alpha-D-glucosamine 6-phosphate (route II): step 2/2. It participates in nucleotide-sugar biosynthesis; UDP-N-acetyl-alpha-D-glucosamine biosynthesis; UDP-N-acetyl-alpha-D-glucosamine from N-acetyl-alpha-D-glucosamine 1-phosphate: step 1/1. It functions in the pathway bacterial outer membrane biogenesis; LPS lipid A biosynthesis. Its function is as follows. Catalyzes the last two sequential reactions in the de novo biosynthetic pathway for UDP-N-acetylglucosamine (UDP-GlcNAc). The C-terminal domain catalyzes the transfer of acetyl group from acetyl coenzyme A to glucosamine-1-phosphate (GlcN-1-P) to produce N-acetylglucosamine-1-phosphate (GlcNAc-1-P), which is converted into UDP-GlcNAc by the transfer of uridine 5-monophosphate (from uridine 5-triphosphate), a reaction catalyzed by the N-terminal domain. In Rhizobium etli (strain CIAT 652), this protein is Bifunctional protein GlmU.